Here is a 476-residue protein sequence, read N- to C-terminus: MAKEALIVKTTPLPQSRISFELEIPSETCKTCLNETISSISRSAKIPGFRVGKIPKQVLIQRIGITQLHASALEKIIDKSWQEALKIKSIEPLSEPELVDGFESVLANFSPEKPLKVTLQTDVAPELKLKKSKGLSVEISKTKFDPKSIDEALQKSRSQFANIIPVTNRAARLGDIAVVSFKGKYKDSDKEIDGGTSESMDLELEKNKMIPGFVEGIVKMKIGDTKTLNLKFPEDYSHEDSRGKEAIFEVNLKDLKEKELPELNDDFAKQSGNKESLKELKKDIEKQLKDNFEKTQKDIKIEALLDALTNELVAEIPKSMIDIEVRNNIEQTAQRFAQQGLDVKSTFTPELVKSLAESTRPQAEKNVQRNLALKALAETENIKVEKDEIDLKMKDYEDAISQSSKQIDIKKLTEVISNDLLKEKLIIWLEENSEVKENTTKTSKTTKNSKTTKATKTTKTTKTTKTSKTQNKKEKK.

The 88-residue stretch at 174 to 261 (GDIAVVSFKG…LKDLKEKELP (88 aa)) folds into the PPIase FKBP-type domain. Residues 436-476 (KENTTKTSKTTKNSKTTKATKTTKTTKTTKTSKTQNKKEKK) are disordered. Over residues 440 to 469 (TKTSKTTKNSKTTKATKTTKTTKTTKTSKT) the composition is skewed to low complexity.

This sequence belongs to the FKBP-type PPIase family. Tig subfamily.

It localises to the cytoplasm. It carries out the reaction [protein]-peptidylproline (omega=180) = [protein]-peptidylproline (omega=0). Its function is as follows. Involved in protein export. Acts as a chaperone by maintaining the newly synthesized protein in an open conformation. Functions as a peptidyl-prolyl cis-trans isomerase. The chain is Trigger factor from Prochlorococcus marinus (strain MIT 9215).